A 152-amino-acid polypeptide reads, in one-letter code: Protein IpgF (152 aa).

The N-terminal stretch at 1–17 (MSRFVFILLCFIPHLGR) is a signal peptide.

It belongs to the IagB/IpgF/P19 family.

This is Protein IpgF (ipgF) from Shigella flexneri.